Reading from the N-terminus, the 1573-residue chain is Soluble scavenger receptor cysteine-rich domain-containing protein SSC5D (1573 aa).

The first 16 residues, methionine 1 to alanine 16, serve as a signal peptide directing secretion. The SRCR 1 domain occupies leucine 20–alanine 120. Intrachain disulfides connect cysteine 45/cysteine 109, cysteine 58/cysteine 119, and cysteine 89/cysteine 99. Residues glutamate 153–alanine 192 are disordered. N-linked (GlcNAc...) asparagine glycosylation is present at asparagine 168. Residues serine 170–lysine 181 show a composition bias toward basic residues. 2 SRCR domains span residues leucine 198–threonine 298 and leucine 304–aspartate 404. 6 cysteine pairs are disulfide-bonded: cysteine 223–cysteine 287, cysteine 236–cysteine 297, cysteine 267–cysteine 277, cysteine 329–cysteine 393, cysteine 342–cysteine 403, and cysteine 373–cysteine 383. N-linked (GlcNAc...) asparagine glycosylation is found at asparagine 376 and asparagine 420. Residues proline 412 to proline 465 form a disordered region. A compositionally biased stretch (polar residues) spans proline 431 to proline 440. Positions leucine 467–threonine 568 constitute an SRCR 4 domain. Disulfide bonds link cysteine 492-cysteine 557, cysteine 505-cysteine 567, and cysteine 537-cysteine 547. The disordered stretch occupies residues glutamate 614 to leucine 769. Residues lysine 626–lysine 637 are compositionally biased toward basic residues. Residues alanine 654–glutamate 671 are compositionally biased toward polar residues. Residues alanine 672–threonine 685 show a composition bias toward basic and acidic residues. 2 stretches are compositionally biased toward polar residues: residues glutamate 687 to proline 702 and lysine 711 to glutamine 735. One can recognise an SRCR 5 domain in the interval valine 772 to threonine 872. 3 disulfides stabilise this stretch: cysteine 797–cysteine 861, cysteine 810–cysteine 871, and cysteine 841–cysteine 851. 2 disordered regions span residues lysine 895–alanine 1475 and methionine 1554–valine 1573. The segment covering arginine 924–tyrosine 934 has biased composition (basic and acidic residues). Pro residues-rich tracts occupy residues proline 1004–proline 1020 and threonine 1083–threonine 1093. Over residues aspartate 1101–serine 1140 the composition is skewed to polar residues. Residues aspartate 1144 to alanine 1160 are compositionally biased toward pro residues. Low complexity-rich tracts occupy residues proline 1161–phenylalanine 1175 and proline 1185–proline 1277. A compositionally biased stretch (pro residues) spans threonine 1278 to proline 1328. 2 stretches are compositionally biased toward polar residues: residues valine 1335–leucine 1354 and proline 1364–isoleucine 1380. The segment covering proline 1381–serine 1401 has biased composition (low complexity). The span at glycine 1464–alanine 1475 shows a compositional bias: pro residues.

In terms of assembly, interacts with LGALS1 and laminin. In terms of tissue distribution, highly expressed in monocytes/macrophages and T-lymphocytes. Highly expressed in placenta and spleen, and also detected at lower levels in colon, and more weakly in lung, heart and kidney.

Its subcellular location is the secreted. It is found in the cytoplasm. Functionally, binds to extracellular matrix proteins. Binds to pathogen-associated molecular patterns (PAMPs) present on the cell walls of Gram-positive and Gram-negative bacteria and fungi, behaving as a pattern recognition receptor (PRR). Induces bacterial and fungal aggregation and subsequent inhibition of PAMP-induced cytokine release. Does not possess intrinsic bactericidal activity. May play a role in the innate defense and homeostasis of certain epithelial surfaces. This Homo sapiens (Human) protein is Soluble scavenger receptor cysteine-rich domain-containing protein SSC5D (SSC5D).